Reading from the N-terminus, the 414-residue chain is CinA-like protein (414 aa).

Belongs to the CinA family.

In Koribacter versatilis (strain Ellin345), this protein is CinA-like protein.